The following is a 78-amino-acid chain: Large ribosomal subunit protein bL28 (78 aa).

This sequence belongs to the bacterial ribosomal protein bL28 family.

This Xylella fastidiosa (strain 9a5c) protein is Large ribosomal subunit protein bL28 (rpmB).